Here is a 137-residue protein sequence, read N- to C-terminus: Nucleoside diphosphate kinase (137 aa).

The ATP site is built by lysine 9, phenylalanine 57, arginine 85, threonine 91, arginine 102, and asparagine 112. Histidine 115 serves as the catalytic Pros-phosphohistidine intermediate.

Belongs to the NDK family. In terms of assembly, homotetramer. It depends on Mg(2+) as a cofactor.

It is found in the cytoplasm. The catalysed reaction is a 2'-deoxyribonucleoside 5'-diphosphate + ATP = a 2'-deoxyribonucleoside 5'-triphosphate + ADP. It catalyses the reaction a ribonucleoside 5'-diphosphate + ATP = a ribonucleoside 5'-triphosphate + ADP. Functionally, major role in the synthesis of nucleoside triphosphates other than ATP. The ATP gamma phosphate is transferred to the NDP beta phosphate via a ping-pong mechanism, using a phosphorylated active-site intermediate. The protein is Nucleoside diphosphate kinase of Geotalea daltonii (strain DSM 22248 / JCM 15807 / FRC-32) (Geobacter daltonii).